Here is a 90-residue protein sequence, read N- to C-terminus: DNA-binding protein HU-alpha (90 aa).

It belongs to the bacterial histone-like protein family. In terms of assembly, heterodimer of an alpha and a beta chain.

In terms of biological role, histone-like DNA-binding protein which is capable of wrapping DNA to stabilize it, and thus to prevent its denaturation under extreme environmental conditions. This chain is DNA-binding protein HU-alpha (hupA), found in Pseudomonas aeruginosa (strain ATCC 15692 / DSM 22644 / CIP 104116 / JCM 14847 / LMG 12228 / 1C / PRS 101 / PAO1).